Consider the following 93-residue polypeptide: HIG1 domain family member 1A, mitochondrial (93 aa).

Residue serine 2 is modified to N-acetylserine. Residues 2–93 (STNTDLSLSS…YQEFWAKRKP (92 aa)) enclose the HIG1 domain. Serine 8 carries the post-translational modification Phosphoserine. A run of 2 helical transmembrane segments spans residues 28 to 48 (PFVPIGMAGFAAIVAYGLYKL) and 69 to 89 (GFVVGAMTLGMGYSMYQEFWA). Residues 90–93 (KRKP) are Mitochondrial matrix-facing.

As to quaternary structure, associates with cytochrome c oxidase (COX, complex IV); proposed complex component. Also associates with respiratory chain supercomplexes. As to expression, expressed in brain and spinal cord.

The protein localises to the mitochondrion membrane. The protein resides in the mitochondrion inner membrane. Functionally, proposed subunit of cytochrome c oxidase (COX, complex IV), which is the terminal component of the mitochondrial respiratory chain that catalyzes the reduction of oxygen to water. May play a role in the assembly of respiratory supercomplexes. This Rattus norvegicus (Rat) protein is HIG1 domain family member 1A, mitochondrial (Higd1a).